A 146-amino-acid chain; its full sequence is Hemoglobin subunit beta (146 aa).

Residue Val-1 is modified to N-acetylvaline. A Globin domain is found at 2-146 (HLTGEEKAAV…VANALAHKYH (145 aa)). Phosphothreonine is present on Thr-12. Ser-44 carries the post-translational modification Phosphoserine. Lys-59 bears the N6-acetyllysine mark. His-63 is a binding site for heme b. Lys-82 is modified (N6-acetyllysine). His-92 is a heme b binding site. Cys-93 carries the S-nitrosocysteine modification. Lys-144 is subject to N6-acetyllysine.

Belongs to the globin family. In terms of assembly, heterotetramer of two alpha chains and two beta chains. In terms of tissue distribution, red blood cells.

Involved in oxygen transport from the lung to the various peripheral tissues. The polypeptide is Hemoglobin subunit beta (HBB) (Ailurus fulgens (Himalayan red panda)).